Reading from the N-terminus, the 181-residue chain is Peptidyl-tRNA hydrolase (181 aa).

Position 14 (Y14) interacts with tRNA. The active-site Proton acceptor is the H19. TRNA contacts are provided by Y62, N64, and N108.

It belongs to the PTH family. In terms of assembly, monomer.

The protein resides in the cytoplasm. The enzyme catalyses an N-acyl-L-alpha-aminoacyl-tRNA + H2O = an N-acyl-L-amino acid + a tRNA + H(+). Hydrolyzes ribosome-free peptidyl-tRNAs (with 1 or more amino acids incorporated), which drop off the ribosome during protein synthesis, or as a result of ribosome stalling. In terms of biological role, catalyzes the release of premature peptidyl moieties from peptidyl-tRNA molecules trapped in stalled 50S ribosomal subunits, and thus maintains levels of free tRNAs and 50S ribosomes. This chain is Peptidyl-tRNA hydrolase, found in Campylobacter jejuni subsp. jejuni serotype O:23/36 (strain 81-176).